The following is a 425-amino-acid chain: Serine--tRNA ligase 2 (425 aa).

Thr234 to Glu236 lines the L-serine pocket. Position 265 to 267 (Arg265 to Glu267) interacts with ATP. Glu288 is an L-serine binding site. Glu352–Ser355 contributes to the ATP binding site. Residue Ser388 participates in L-serine binding.

The protein belongs to the class-II aminoacyl-tRNA synthetase family. Type-1 seryl-tRNA synthetase subfamily. Homodimer. The tRNA molecule binds across the dimer.

The protein localises to the cytoplasm. It catalyses the reaction tRNA(Ser) + L-serine + ATP = L-seryl-tRNA(Ser) + AMP + diphosphate + H(+). The enzyme catalyses tRNA(Sec) + L-serine + ATP = L-seryl-tRNA(Sec) + AMP + diphosphate + H(+). It functions in the pathway aminoacyl-tRNA biosynthesis; selenocysteinyl-tRNA(Sec) biosynthesis; L-seryl-tRNA(Sec) from L-serine and tRNA(Sec): step 1/1. Catalyzes the attachment of serine to tRNA(Ser). Is also able to aminoacylate tRNA(Sec) with serine, to form the misacylated tRNA L-seryl-tRNA(Sec), which will be further converted into selenocysteinyl-tRNA(Sec). In Clostridium acetobutylicum (strain ATCC 824 / DSM 792 / JCM 1419 / IAM 19013 / LMG 5710 / NBRC 13948 / NRRL B-527 / VKM B-1787 / 2291 / W), this protein is Serine--tRNA ligase 2.